The sequence spans 231 residues: 4-hydroxy-tetrahydrodipicolinate reductase (231 aa).

Residues D33, 68–70 (CTT), and 92–95 (SSNT) contribute to the NAD(+) site. H124 serves as the catalytic Proton donor/acceptor. H125 serves as a coordination point for (S)-2,3,4,5-tetrahydrodipicolinate. The Proton donor role is filled by K128. 134 to 135 (GT) serves as a coordination point for (S)-2,3,4,5-tetrahydrodipicolinate.

This sequence belongs to the DapB family.

The protein localises to the cytoplasm. It carries out the reaction (S)-2,3,4,5-tetrahydrodipicolinate + NAD(+) + H2O = (2S,4S)-4-hydroxy-2,3,4,5-tetrahydrodipicolinate + NADH + H(+). It catalyses the reaction (S)-2,3,4,5-tetrahydrodipicolinate + NADP(+) + H2O = (2S,4S)-4-hydroxy-2,3,4,5-tetrahydrodipicolinate + NADPH + H(+). It participates in amino-acid biosynthesis; L-lysine biosynthesis via DAP pathway; (S)-tetrahydrodipicolinate from L-aspartate: step 4/4. In terms of biological role, catalyzes the conversion of 4-hydroxy-tetrahydrodipicolinate (HTPA) to tetrahydrodipicolinate. This chain is 4-hydroxy-tetrahydrodipicolinate reductase, found in Brachyspira hyodysenteriae (strain ATCC 49526 / WA1).